The sequence spans 759 residues: Secretin XpsD (759 aa).

The signal sequence occupies residues 1–21 (MSERMTPRLFPVSLLIGLLAG). The N-palmitoyl cysteine moiety is linked to residue cysteine 22. Cysteine 22 carries the S-diacylglycerol cysteine lipid modification. Residues 40–51 (VGAAGATQTTAE) are compositionally biased toward low complexity. A disordered region spans residues 40-69 (VGAAGATQTTAEQRADGNASAKPTPVIRRG). Residues 92-187 (GSATFNFEGE…APSTASPSAA (96 aa)) are N0. An N1 region spans residues 189–253 (GFEVRVVPLK…VQIFDVDWLS (65 aa)). Residues 254–323 (GMSVGVFPIQ…IQQWLDRIDS (70 aa)) are N2. Residues 326–474 (GGVRLFSYEL…SIRDVIEKLD (149 aa)) are N3. The tract at residues 352–434 (GGRGNGGNSG…PPSTNQNGSV (83 aa)) is disordered. Gly residues predominate over residues 392–401 (ATGGDIGGTS). Over residues 425-434 (PPSTNQNGSV) the composition is skewed to polar residues. The interval 479 to 734 (QVHIEAQIAE…VLITPSIVRN (256 aa)) is secretin. The segment at 736-759 (QDARDLTDEYGSKFKSMRPMDVHK) is s domain.

It belongs to the bacterial secretin family. GSP D subfamily. As to quaternary structure, forms a cylindrical channel with 15 subunits. Binds to XpsN.

Its subcellular location is the cell outer membrane. Involved in a type II secretion system (T2SS, formerly general secretion pathway, GSP) for the export of proteins. This subunit forms the outer membrane channel. This Xanthomonas campestris pv. campestris (strain ATCC 33913 / DSM 3586 / NCPPB 528 / LMG 568 / P 25) protein is Secretin XpsD (xpsD).